We begin with the raw amino-acid sequence, 84 residues long: Cell division topological specificity factor (84 aa).

It belongs to the MinE family.

Functionally, prevents the cell division inhibition by proteins MinC and MinD at internal division sites while permitting inhibition at polar sites. This ensures cell division at the proper site by restricting the formation of a division septum at the midpoint of the long axis of the cell. The chain is Cell division topological specificity factor from Burkholderia cenocepacia (strain ATCC BAA-245 / DSM 16553 / LMG 16656 / NCTC 13227 / J2315 / CF5610) (Burkholderia cepacia (strain J2315)).